Reading from the N-terminus, the 177-residue chain is MSRVGKAPIALPKGAEVNVAAGVLSVKGPLGTLSQPIHSLVKVNVENDTLTFAPADESREANALQGTMRALAANMVKGVTTGFERKLNLVGVGYRAQLQGTALKLQLGFSHDVIHEMPEGVKAETPTQTEILIKGADKQKVGQVAAEVRAYRPPEPYKGKGVRYSDERVILKETKKK.

It belongs to the universal ribosomal protein uL6 family. In terms of assembly, part of the 50S ribosomal subunit.

In terms of biological role, this protein binds to the 23S rRNA, and is important in its secondary structure. It is located near the subunit interface in the base of the L7/L12 stalk, and near the tRNA binding site of the peptidyltransferase center. This is Large ribosomal subunit protein uL6 from Cupriavidus taiwanensis (strain DSM 17343 / BCRC 17206 / CCUG 44338 / CIP 107171 / LMG 19424 / R1) (Ralstonia taiwanensis (strain LMG 19424)).